A 408-amino-acid chain; its full sequence is Succinylornithine transaminase (408 aa).

K252 is modified (N6-(pyridoxal phosphate)lysine).

The protein belongs to the class-III pyridoxal-phosphate-dependent aminotransferase family. AstC subfamily. Pyridoxal 5'-phosphate is required as a cofactor.

It catalyses the reaction N(2)-succinyl-L-ornithine + 2-oxoglutarate = N-succinyl-L-glutamate 5-semialdehyde + L-glutamate. It functions in the pathway amino-acid degradation; L-arginine degradation via AST pathway; L-glutamate and succinate from L-arginine: step 3/5. In terms of biological role, catalyzes the transamination of N(2)-succinylornithine and alpha-ketoglutarate into N(2)-succinylglutamate semialdehyde and glutamate. Can also act as an acetylornithine aminotransferase. The sequence is that of Succinylornithine transaminase from Salmonella agona (strain SL483).